Consider the following 90-residue polypeptide: UPF0335 protein Smed_2680 (90 aa).

It belongs to the UPF0335 family.

The protein is UPF0335 protein Smed_2680 of Sinorhizobium medicae (strain WSM419) (Ensifer medicae).